We begin with the raw amino-acid sequence, 164 residues long: uncharacterized protein (164 aa).

This is an uncharacterized protein from Caenorhabditis elegans.